The chain runs to 287 residues: Pyridoxal kinase PdxY (287 aa).

Residues serine 9 and 44 to 45 each bind substrate; that span reads MQ. Residues aspartate 111, alanine 142, glutamate 147, and lysine 180 each contribute to the ATP site. Residue aspartate 221 coordinates substrate.

This sequence belongs to the pyridoxine kinase family. PdxY subfamily. In terms of assembly, homodimer. It depends on Mg(2+) as a cofactor.

It catalyses the reaction pyridoxal + ATP = pyridoxal 5'-phosphate + ADP + H(+). It functions in the pathway cofactor metabolism; pyridoxal 5'-phosphate salvage; pyridoxal 5'-phosphate from pyridoxal: step 1/1. In terms of biological role, pyridoxal kinase involved in the salvage pathway of pyridoxal 5'-phosphate (PLP). Catalyzes the phosphorylation of pyridoxal to PLP. In Burkholderia pseudomallei (strain K96243), this protein is Pyridoxal kinase PdxY.